Here is a 207-residue protein sequence, read N- to C-terminus: Superoxide dismutase [Mn] (207 aa).

Mn(2+)-binding residues include His28, His76, Asp160, and His164.

This sequence belongs to the iron/manganese superoxide dismutase family. Mn(2+) serves as cofactor.

It catalyses the reaction 2 superoxide + 2 H(+) = H2O2 + O2. Functionally, destroys superoxide anion radicals which are normally produced within the cells and which are toxic to biological systems. The sequence is that of Superoxide dismutase [Mn] (sodA) from Mycobacterium leprae (strain TN).